A 360-amino-acid chain; its full sequence is DNA replication and repair protein RecF (360 aa).

Position 30 to 37 (30 to 37) interacts with ATP; it reads GRNAQGKT.

It belongs to the RecF family.

Its subcellular location is the cytoplasm. Its function is as follows. The RecF protein is involved in DNA metabolism; it is required for DNA replication and normal SOS inducibility. RecF binds preferentially to single-stranded, linear DNA. It also seems to bind ATP. In Desulforudis audaxviator (strain MP104C), this protein is DNA replication and repair protein RecF.